The sequence spans 480 residues: Sensor histidine kinase CusS (480 aa).

Residues 1–15 lie on the Cytoplasmic side of the membrane; sequence MVSKPFQRPFSLATR. Residues 16-36 traverse the membrane as a helical segment; it reads LTFFISLATIAAFFAFAWIMI. Over 37 to 186 the chain is Periplasmic; it reads HSVKVHFAEQ…LHYINDLMNK (150 aa). Residues 187–207 traverse the membrane as a helical segment; that stretch reads LIMTASVISILIVFIVLLAVH. The region spanning 208-260 is the HAMP domain; that stretch reads KGHAPIRSVSRQIQNITSKDLDVRLDPQTVPIELEQLVLSFNHMIERIEDVFT. At 208-480 the chain is on the cytoplasmic side; the sequence is KGHAPIRSVS…GTRFVITLPA (273 aa). Residues 268-480 enclose the Histidine kinase domain; the sequence is DIAHEIRTPI…GTRFVITLPA (213 aa). Histidine 271 carries the phosphohistidine; by autocatalysis modification.

Autophosphorylated.

The protein localises to the cell inner membrane. It carries out the reaction ATP + protein L-histidine = ADP + protein N-phospho-L-histidine.. Functionally, member of the two-component regulatory system CusS/CusR involved in response to copper and silver. Acts as a copper/silver ion sensor. Activates CusR by phosphorylation. The chain is Sensor histidine kinase CusS (cusS) from Escherichia coli (strain K12).